A 30-amino-acid polypeptide reads, in one-letter code: Fibrinogen (30 aa).

As to quaternary structure, homodimer. Secreted into the hemolymph.

It localises to the secreted. The protein resides in the extracellular space. In terms of biological role, clotting protein. In Panulirus interruptus (California spiny lobster), this protein is Fibrinogen.